Reading from the N-terminus, the 231-residue chain is NADH-ubiquinone oxidoreductase chain 4 (231 aa).

A run of 6 helical transmembrane segments spans residues 1-21, 34-54, 61-80, 84-106, 118-138, and 169-189; these read PIAGSMVLAAILLKLGGYGII, VFLPFIILALWGAILANLTCL, SLIAYSSISHMGLVVAAIMI, WGLSGAMALMIAHGFTSSALFCL, ILILTRGFHNILPMTSTWWLL, and TIILLGLSMLITASYSLHMFL.

The protein belongs to the complex I subunit 4 family.

Its subcellular location is the mitochondrion membrane. It carries out the reaction a ubiquinone + NADH + 5 H(+)(in) = a ubiquinol + NAD(+) + 4 H(+)(out). Functionally, core subunit of the mitochondrial membrane respiratory chain NADH dehydrogenase (Complex I) that is believed to belong to the minimal assembly required for catalysis. Complex I functions in the transfer of electrons from NADH to the respiratory chain. The immediate electron acceptor for the enzyme is believed to be ubiquinone. This chain is NADH-ubiquinone oxidoreductase chain 4 (MT-ND4), found in Porthidium nasutum (Hognosed pitviper).